Here is a 477-residue protein sequence, read N- to C-terminus: MGAYTHVDFHESRLLKDKQDYLSFKSADEAPPDPPGYVRPDSYVRAYLIQRADFPNTQSLSVTLSIASNKLASGLMGSDAVSSSFMLMNDVGDYFECGVCHNKPYLGREVIFCRKYIGGRGVEITTGKNYTSNNWNEASYVIQVNVVDGLAQTTVNSTYTQTDVSGLPKNWTRIYKITKIVSVDQNLYPGCFSDSKLGVMRIRSLLVSPVRIFFRDILLKPLKKSFNARIEDVLNIDDTSLLVPSPVVPESTGGVGPSEQLDVVALTSDVTELINTRGQGKICFPDSVLSINEADIYDERYLPITEALQINARLRRLVLSKGGSQTPRDMGNMIVAMIQLFVLYSTVKNISVKDGYRVETELGQKRVYLSYSEVREAILGGKYGASPTNTVRSFMRYFAHTTITLLIEKKIQPACTALAKHGVPKRFTPYCFDFALLDNRYYPADVLKANAMACAIAIKSANLRRKGSETYNILESI.

It belongs to the closteroviridae minor capsid protein family.

It localises to the virion. In terms of biological role, minor capsid protein that encapsidates the 5'-terminal portion of the viral genome. The polypeptide is Minor capsid protein (Vitis vinifera (Grape)).